Here is a 434-residue protein sequence, read N- to C-terminus: Nicotinate phosphoribosyltransferase (434 aa).

His-242 bears the Phosphohistidine; by autocatalysis mark.

The protein belongs to the NAPRTase family. Transiently phosphorylated on a His residue during the reaction cycle. Phosphorylation strongly increases the affinity for substrates and increases the rate of nicotinate D-ribonucleotide production. Dephosphorylation regenerates the low-affinity form of the enzyme, leading to product release.

The enzyme catalyses nicotinate + 5-phospho-alpha-D-ribose 1-diphosphate + ATP + H2O = nicotinate beta-D-ribonucleotide + ADP + phosphate + diphosphate. The protein operates within cofactor biosynthesis; NAD(+) biosynthesis; nicotinate D-ribonucleotide from nicotinate: step 1/1. Functionally, catalyzes the synthesis of beta-nicotinate D-ribonucleotide from nicotinate and 5-phospho-D-ribose 1-phosphate at the expense of ATP. This Brucella melitensis biotype 1 (strain ATCC 23456 / CCUG 17765 / NCTC 10094 / 16M) protein is Nicotinate phosphoribosyltransferase.